The chain runs to 337 residues: Large ribosomal subunit protein uL3 (337 aa).

Residues 1–29 are disordered; sequence MPKINRPRRGSLAFSPRKRAQSPIPKYKS.

This sequence belongs to the universal ribosomal protein uL3 family. In terms of assembly, part of the 50S ribosomal subunit. Forms a cluster with proteins L14 and L24e.

Functionally, one of the primary rRNA binding proteins, it binds directly near the 3'-end of the 23S rRNA, where it nucleates assembly of the 50S subunit. The chain is Large ribosomal subunit protein uL3 from Methanoregula boonei (strain DSM 21154 / JCM 14090 / 6A8).